The primary structure comprises 156 residues: Endogenous retrovirus group K member 8 Pro protein (156 aa).

One can recognise a Peptidase A2 domain in the interval 21 to 96 (FEGLVDTGAD…IPLNLWGRDL (76 aa)). Asp-26 is an active-site residue. Positions 111–156 (YSPTSQKIMTKRGYIPGKGLGKNEDGIKIPFEAKINQKREGIGYPF) constitute a G-patch domain.

This sequence belongs to the peptidase A2 family. HERV class-II K(HML-2) subfamily. As to quaternary structure, active as a homodimer. Post-translationally, autoproteolytically processed at the N-terminus. Expected C-terminal autoprocessing not detected. The sequence shown is that of the processed Pro protein.

The enzyme catalyses Processing at the authentic HIV-1 PR recognition site and release of the mature p17 matrix and the p24 capsid protein, as a result of the cleavage of the -SQNY-|-PIVQ- cleavage site.. Its function is as follows. Retroviral proteases have roles in the processing of the primary translation products and the maturation of the viral particle. Endogenous Pro proteins may have kept, lost or modified their original function during evolution. The protein is Endogenous retrovirus group K member 8 Pro protein (ERVK-8) of Homo sapiens (Human).